The sequence spans 246 residues: Ly6/PLAUR domain-containing protein 4 (246 aa).

The N-terminal stretch at 1–26 (MGPQHLSPMQLLCLLGAISSLPWAEA) is a signal peptide. The N-linked (GlcNAc...) asparagine glycan is linked to N117. Residues 142–223 (CPTCVGEHSK…INIVEKALFT (82 aa)) form the UPAR/Ly6 domain. Residue A225 is the site of GPI-anchor amidated alanine attachment. The propeptide at 226 to 246 (GTPCRSPSWGILLGLLFAFKG) is removed in mature form.

The protein resides in the cell membrane. The polypeptide is Ly6/PLAUR domain-containing protein 4 (LYPD4) (Bos taurus (Bovine)).